The primary structure comprises 412 residues: Intraflagellar transport protein che-13 (412 aa).

Disordered stretches follow at residues 1–21 (MEEE…GSAI) and 162–193 (PPKE…NFLD). Residues 165–193 (EEDEDTAVDEQDEDDDNDDIVEEPMNFLD) show a composition bias toward acidic residues. Residues 302-393 (QLASMMSKFR…VQIGVFEQSI (92 aa)) adopt a coiled-coil conformation.

It belongs to the IFT57 family. As to quaternary structure, component of the IFT complex B composed of at least che-2, che-13, dyf-1, dyf-3, dyf-6, dyf-11, dyf-13, ift-20, ift-74, ift-81, ifta-2, osm-1, osm-5 and osm-6.

Its subcellular location is the cytoplasm. It localises to the cytoskeleton. The protein localises to the cilium axoneme. Its function is as follows. Component of the intraflagellar transport (IFT) complex B required for transport of proteins in the motile cilium. May be required for ciliary entrance and transport of specific ciliary cargo proteins such as che-3 which are related to motility. Required for the formation of chemosensory cilia that detect chemosensory cues. This chain is Intraflagellar transport protein che-13, found in Caenorhabditis elegans.